Reading from the N-terminus, the 381-residue chain is Succinyl-diaminopimelate desuccinylase (381 aa).

Zn(2+) is bound at residue H70. The active site involves D72. A Zn(2+)-binding site is contributed by D103. E136 serves as the catalytic Proton acceptor. The Zn(2+) site is built by E137, E165, and H354.

It belongs to the peptidase M20A family. DapE subfamily. In terms of assembly, homodimer. It depends on Zn(2+) as a cofactor. Co(2+) is required as a cofactor.

The enzyme catalyses N-succinyl-(2S,6S)-2,6-diaminopimelate + H2O = (2S,6S)-2,6-diaminopimelate + succinate. Its pathway is amino-acid biosynthesis; L-lysine biosynthesis via DAP pathway; LL-2,6-diaminopimelate from (S)-tetrahydrodipicolinate (succinylase route): step 3/3. Functionally, catalyzes the hydrolysis of N-succinyl-L,L-diaminopimelic acid (SDAP), forming succinate and LL-2,6-diaminopimelate (DAP), an intermediate involved in the bacterial biosynthesis of lysine and meso-diaminopimelic acid, an essential component of bacterial cell walls. The chain is Succinyl-diaminopimelate desuccinylase from Roseobacter denitrificans (strain ATCC 33942 / OCh 114) (Erythrobacter sp. (strain OCh 114)).